A 364-amino-acid chain; its full sequence is RNA polymerase II holoenzyme cyclin-like subunit (364 aa).

Residues 53–143 (QQINRLSKRI…VGECEFSLIS (91 aa)) form the Cyclin N-terminal domain. The disordered stretch occupies residues 268–303 (PGFGSQGSQQQAGFSQGNSQGSLQGDSAAAEPKKVT). Low complexity predominate over residues 273 to 289 (QGSQQQAGFSQGNSQGS).

This sequence belongs to the cyclin family. Cyclin C subfamily. As to quaternary structure, component of the SRB8-11 complex, a regulatory module of the Mediator complex.

It localises to the nucleus. Its function is as follows. Component of the SRB8-11 complex. The SRB8-11 complex is a regulatory module of the Mediator complex which is itself involved in regulation of basal and activated RNA polymerase II-dependent transcription. The SRB8-11 complex may be involved in the transcriptional repression of a subset of genes regulated by Mediator. It may inhibit the association of the Mediator complex with RNA polymerase II to form the holoenzyme complex. The SRB8-11 complex phosphorylates the C-terminal domain (CTD) of the largest subunit of RNA polymerase II. The sequence is that of RNA polymerase II holoenzyme cyclin-like subunit (SSN8) from Chaetomium globosum (strain ATCC 6205 / CBS 148.51 / DSM 1962 / NBRC 6347 / NRRL 1970) (Soil fungus).